The chain runs to 457 residues: ATP synthase subunit beta (457 aa).

147 to 154 (GGAGVGKT) is an ATP binding site.

Belongs to the ATPase alpha/beta chains family. F-type ATPases have 2 components, CF(1) - the catalytic core - and CF(0) - the membrane proton channel. CF(1) has five subunits: alpha(3), beta(3), gamma(1), delta(1), epsilon(1). CF(0) has three main subunits: a(1), b(2) and c(9-12). The alpha and beta chains form an alternating ring which encloses part of the gamma chain. CF(1) is attached to CF(0) by a central stalk formed by the gamma and epsilon chains, while a peripheral stalk is formed by the delta and b chains.

The protein resides in the cell inner membrane. The catalysed reaction is ATP + H2O + 4 H(+)(in) = ADP + phosphate + 5 H(+)(out). In terms of biological role, produces ATP from ADP in the presence of a proton gradient across the membrane. The catalytic sites are hosted primarily by the beta subunits. This is ATP synthase subunit beta from Glaesserella parasuis serovar 5 (strain SH0165) (Haemophilus parasuis).